We begin with the raw amino-acid sequence, 333 residues long: COMPASS-like H3K4 histone methylase component WDR5B (333 aa).

8 WD repeats span residues 1-40, 41-80, 83-122, 126-167, 169-207, 211-252, 253-295, and 298-333; these read MPSGGNGTSNGVANANSTGNAGTSGNVPIYKPYRHLKTLE, GHTAAISCVKFSNDGNLLASASVDKTMILWSATNYSLIHR, GHSSGISDLAWSSDSHYTCSASDDCTLRIWDARSPYECLK, GHTN…RMIK, HSMPISSVHFNRDGSLIVSASHDGSCKIWDAKEGTCLKT, DKSP…KVYT, GHTN…ILQR, and GHTDAVISVSCHPVQNEISSSGNHLDKTIRIWKQDA.

Unlike WDR5A, does not interact with RBL or TRO.

The sequence is that of COMPASS-like H3K4 histone methylase component WDR5B from Arabidopsis thaliana (Mouse-ear cress).